A 295-amino-acid polypeptide reads, in one-letter code: 4-hydroxy-tetrahydrodipicolinate synthase (295 aa).

Pyruvate is bound at residue Thr-45. Tyr-131 functions as the Proton donor/acceptor in the catalytic mechanism. Lys-159 serves as the catalytic Schiff-base intermediate with substrate. Residue Val-202 coordinates pyruvate.

Belongs to the DapA family. As to quaternary structure, homotetramer; dimer of dimers.

Its subcellular location is the cytoplasm. The enzyme catalyses L-aspartate 4-semialdehyde + pyruvate = (2S,4S)-4-hydroxy-2,3,4,5-tetrahydrodipicolinate + H2O + H(+). It functions in the pathway amino-acid biosynthesis; L-lysine biosynthesis via DAP pathway; (S)-tetrahydrodipicolinate from L-aspartate: step 3/4. Its function is as follows. Catalyzes the condensation of (S)-aspartate-beta-semialdehyde [(S)-ASA] and pyruvate to 4-hydroxy-tetrahydrodipicolinate (HTPA). In Methanothrix thermoacetophila (strain DSM 6194 / JCM 14653 / NBRC 101360 / PT) (Methanosaeta thermophila), this protein is 4-hydroxy-tetrahydrodipicolinate synthase.